We begin with the raw amino-acid sequence, 72 residues long: Translation initiation factor IF-1 (72 aa).

The 72-residue stretch at 1 to 72 folds into the S1-like domain; the sequence is MAKEDSIEMQ…TKGRIVFRAR (72 aa).

Belongs to the IF-1 family. In terms of assembly, component of the 30S ribosomal translation pre-initiation complex which assembles on the 30S ribosome in the order IF-2 and IF-3, IF-1 and N-formylmethionyl-tRNA(fMet); mRNA recruitment can occur at any time during PIC assembly.

Its subcellular location is the cytoplasm. Its function is as follows. One of the essential components for the initiation of protein synthesis. Stabilizes the binding of IF-2 and IF-3 on the 30S subunit to which N-formylmethionyl-tRNA(fMet) subsequently binds. Helps modulate mRNA selection, yielding the 30S pre-initiation complex (PIC). Upon addition of the 50S ribosomal subunit IF-1, IF-2 and IF-3 are released leaving the mature 70S translation initiation complex. The polypeptide is Translation initiation factor IF-1 (Idiomarina loihiensis (strain ATCC BAA-735 / DSM 15497 / L2-TR)).